The chain runs to 245 residues: Octanoyltransferase (245 aa).

A BPL/LPL catalytic domain is found at 54 to 242; sequence QNAPEQVWLL…AFEQIFGPTI (189 aa). Residues 93–100, 173–175, and 186–188 contribute to the substrate site; these read RGGEFTYH, AIG, and GVS. Cys204 acts as the Acyl-thioester intermediate in catalysis.

The protein belongs to the LipB family.

The protein resides in the cytoplasm. The enzyme catalyses octanoyl-[ACP] + L-lysyl-[protein] = N(6)-octanoyl-L-lysyl-[protein] + holo-[ACP] + H(+). It participates in protein modification; protein lipoylation via endogenous pathway; protein N(6)-(lipoyl)lysine from octanoyl-[acyl-carrier-protein]: step 1/2. Catalyzes the transfer of endogenously produced octanoic acid from octanoyl-acyl-carrier-protein onto the lipoyl domains of lipoate-dependent enzymes. Lipoyl-ACP can also act as a substrate although octanoyl-ACP is likely to be the physiological substrate. The polypeptide is Octanoyltransferase (Bartonella quintana (strain Toulouse) (Rochalimaea quintana)).